The chain runs to 243 residues: Orotidine 5'-phosphate decarboxylase (243 aa).

Residues Asp-12, Lys-34, 61 to 70 (DLKFHDIPNT), Thr-125, Arg-187, Gln-196, Gly-216, and Arg-217 contribute to the substrate site. Catalysis depends on Lys-63, which acts as the Proton donor.

This sequence belongs to the OMP decarboxylase family. Type 1 subfamily. As to quaternary structure, homodimer.

The enzyme catalyses orotidine 5'-phosphate + H(+) = UMP + CO2. Its pathway is pyrimidine metabolism; UMP biosynthesis via de novo pathway; UMP from orotate: step 2/2. In terms of biological role, catalyzes the decarboxylation of orotidine 5'-monophosphate (OMP) to uridine 5'-monophosphate (UMP). This is Orotidine 5'-phosphate decarboxylase from Heliobacterium modesticaldum (strain ATCC 51547 / Ice1).